Consider the following 342-residue polypeptide: MKIKVGILGASGYAGNELVRILLNHPKVEISYLGSSSSVGQNYQDLYPNTPLNLCFENKNLDELELDLLFLATPHEFSAKLLNENLLKKMKIIDLSADFRLKNPKDYELWYKFTHPNQELLQNAVYGLCELYKEEIKKASLVANPGCYTTCSILSLYPLFKEKIIDFNSVIIDAKSGVSGAGRSAKVENLFCEVNENIKAYGLASHRHTPEIEEHLSYAAKEKITLQFTPHLVPMQRGILISAYANLKEDLQEQDIRDIYTKYYQNNKFIRLLPPQSLPQTRWVKSSNFADINFSVDQRTKRVIVLGAIDNLIKGAAGQAVQNMNLMFDFDEDEGLKFFANL.

Cysteine 147 is an active-site residue.

Belongs to the NAGSA dehydrogenase family. Type 1 subfamily.

The protein resides in the cytoplasm. It catalyses the reaction N-acetyl-L-glutamate 5-semialdehyde + phosphate + NADP(+) = N-acetyl-L-glutamyl 5-phosphate + NADPH + H(+). The protein operates within amino-acid biosynthesis; L-arginine biosynthesis; N(2)-acetyl-L-ornithine from L-glutamate: step 3/4. Functionally, catalyzes the NADPH-dependent reduction of N-acetyl-5-glutamyl phosphate to yield N-acetyl-L-glutamate 5-semialdehyde. This is N-acetyl-gamma-glutamyl-phosphate reductase from Campylobacter jejuni subsp. jejuni serotype O:6 (strain 81116 / NCTC 11828).